Here is a 264-residue protein sequence, read N- to C-terminus: Glutamate 5-kinase (264 aa).

Lys9 provides a ligand contact to ATP. Residues Ser47, Asp132, and Asn144 each contribute to the substrate site. ATP is bound by residues 164–165 (SD) and 206–212 (TGGIVTK).

This sequence belongs to the glutamate 5-kinase family.

The protein localises to the cytoplasm. It carries out the reaction L-glutamate + ATP = L-glutamyl 5-phosphate + ADP. The protein operates within amino-acid biosynthesis; L-proline biosynthesis; L-glutamate 5-semialdehyde from L-glutamate: step 1/2. Functionally, catalyzes the transfer of a phosphate group to glutamate to form L-glutamate 5-phosphate. The polypeptide is Glutamate 5-kinase (Helicobacter hepaticus (strain ATCC 51449 / 3B1)).